A 266-amino-acid chain; its full sequence is Undecaprenyl-diphosphatase (266 aa).

The next 8 membrane-spanning stretches (helical) occupy residues 4 to 24 (WLIALILGLIEGLTEFIPVSS), 46 to 66 (VLIQLGAILAITGVYFGRLWG), 82 to 102 (IGILLAFLPAVFVGVAAHDFI), 105 to 125 (VLYETPALVCSTLIIGGFILL), 142 to 162 (YPLKTAFIIGLFQCLALVPGV), 182 to 202 (AAEFSFFLAMPTMAGAFAYDL), 216 to 236 (LIGIGFLAALVSGVFVVKTVL), and 244 to 264 (FAPFAYWRIAVGVVGLALLYI).

It belongs to the UppP family.

The protein resides in the cell inner membrane. The catalysed reaction is di-trans,octa-cis-undecaprenyl diphosphate + H2O = di-trans,octa-cis-undecaprenyl phosphate + phosphate + H(+). In terms of biological role, catalyzes the dephosphorylation of undecaprenyl diphosphate (UPP). Confers resistance to bacitracin. The polypeptide is Undecaprenyl-diphosphatase (Caulobacter vibrioides (strain ATCC 19089 / CIP 103742 / CB 15) (Caulobacter crescentus)).